The sequence spans 292 residues: Manganese transport system membrane protein MntC (292 aa).

8 helical membrane passes run 20–40 (ALTA…FIIL), 58–78 (VVIA…TGVI), 96–116 (SAIG…ITGM), 137–157 (TDLW…ILFY), 168–188 (VMAQ…MLLL), 190–210 (LVTV…MLIT), 226–246 (LCLA…FSVI), and 249–269 (VASG…AFFF).

Belongs to the ABC-3 integral membrane protein family.

It localises to the cell membrane. Its function is as follows. This protein is probably a component of a manganese permease, a binding protein-dependent, ATP-driven transport system. This chain is Manganese transport system membrane protein MntC (mntC), found in Halalkalibacterium halodurans (strain ATCC BAA-125 / DSM 18197 / FERM 7344 / JCM 9153 / C-125) (Bacillus halodurans).